The sequence spans 364 residues: tRNA-specific 2-thiouridylase MnmA (364 aa).

Residues 6 to 13 and Leu32 contribute to the ATP site; that span reads AMSGGVDS. The Nucleophile role is filled by Cys101. Residues Cys101 and Cys193 are joined by a disulfide bond. Gly125 contributes to the ATP binding site. The tract at residues 143-145 is interaction with tRNA; it reads KDQ. Cys193 acts as the Cysteine persulfide intermediate in catalysis.

Belongs to the MnmA/TRMU family.

The protein resides in the cytoplasm. The catalysed reaction is S-sulfanyl-L-cysteinyl-[protein] + uridine(34) in tRNA + AH2 + ATP = 2-thiouridine(34) in tRNA + L-cysteinyl-[protein] + A + AMP + diphosphate + H(+). Functionally, catalyzes the 2-thiolation of uridine at the wobble position (U34) of tRNA, leading to the formation of s(2)U34. This chain is tRNA-specific 2-thiouridylase MnmA, found in Rhodococcus opacus (strain B4).